The primary structure comprises 641 residues: Macrolide export ATP-binding/permease protein MacB (641 aa).

Residues 2 to 236 enclose the ABC transporter domain; the sequence is IFLKNICKNI…LILKTMPKEK (235 aa). Residue 34-41 participates in ATP binding; sequence GQSGSGKT. The next 4 helical transmembrane spans lie at 265–285, 519–539, 571–591, and 604–624; these read ILTM…VALG, ACVA…IMLV, MICT…IFAF, and AYSV…FGFF.

This sequence belongs to the ABC transporter superfamily. Macrolide exporter (TC 3.A.1.122) family. In terms of assembly, homodimer.

It localises to the cell inner membrane. In terms of biological role, non-canonical ABC transporter that contains transmembrane domains (TMD), which form a pore in the inner membrane, and an ATP-binding domain (NBD), which is responsible for energy generation. Confers resistance against macrolides. In Campylobacter jejuni subsp. jejuni serotype O:2 (strain ATCC 700819 / NCTC 11168), this protein is Macrolide export ATP-binding/permease protein MacB.